A 569-amino-acid polypeptide reads, in one-letter code: Urease subunit beta (569 aa).

The Urease domain maps to 131-569; that stretch reads GGIDTHIHFI…LSLAQLYNLF (439 aa). Residues His-136, His-138, and Lys-219 each coordinate Ni(2+). Lys-219 carries the N6-carboxylysine modification. A substrate-binding site is contributed by His-221. Ni(2+) is bound by residues His-248 and His-274. The Proton donor role is filled by His-322. Asp-362 serves as a coordination point for Ni(2+).

It belongs to the metallo-dependent hydrolases superfamily. Urease alpha subunit family. As to quaternary structure, heterohexamer of 3 UreA (alpha) and 3 UreB (beta) subunits. It depends on Ni cation as a cofactor. Post-translationally, carboxylation allows a single lysine to coordinate two nickel ions.

The protein resides in the cytoplasm. It carries out the reaction urea + 2 H2O + H(+) = hydrogencarbonate + 2 NH4(+). Its pathway is nitrogen metabolism; urea degradation; CO(2) and NH(3) from urea (urease route): step 1/1. The chain is Urease subunit beta from Helicobacter felis (strain ATCC 49179 / CCUG 28539 / NCTC 12436 / CS1).